A 474-amino-acid polypeptide reads, in one-letter code: Probable cytosol aminopeptidase (474 aa).

Positions 237 and 242 each coordinate Mn(2+). K249 is a catalytic residue. Mn(2+) contacts are provided by D260, D319, and E321. Residue R323 is part of the active site.

The protein belongs to the peptidase M17 family. The cofactor is Mn(2+).

It localises to the cytoplasm. It carries out the reaction Release of an N-terminal amino acid, Xaa-|-Yaa-, in which Xaa is preferably Leu, but may be other amino acids including Pro although not Arg or Lys, and Yaa may be Pro. Amino acid amides and methyl esters are also readily hydrolyzed, but rates on arylamides are exceedingly low.. The catalysed reaction is Release of an N-terminal amino acid, preferentially leucine, but not glutamic or aspartic acids.. Functionally, presumably involved in the processing and regular turnover of intracellular proteins. Catalyzes the removal of unsubstituted N-terminal amino acids from various peptides. This Helicobacter hepaticus (strain ATCC 51449 / 3B1) protein is Probable cytosol aminopeptidase.